The primary structure comprises 164 residues: 6,7-dimethyl-8-ribityllumazine synthase (164 aa).

Residues Y30, 61–63 (ALE), and 85–87 (CVI) each bind 5-amino-6-(D-ribitylamino)uracil. 90-91 (ET) contributes to the (2S)-2-hydroxy-3-oxobutyl phosphate binding site. The active-site Proton donor is H93. N118 contacts 5-amino-6-(D-ribitylamino)uracil. R132 contacts (2S)-2-hydroxy-3-oxobutyl phosphate.

The protein belongs to the DMRL synthase family.

The catalysed reaction is (2S)-2-hydroxy-3-oxobutyl phosphate + 5-amino-6-(D-ribitylamino)uracil = 6,7-dimethyl-8-(1-D-ribityl)lumazine + phosphate + 2 H2O + H(+). Its pathway is cofactor biosynthesis; riboflavin biosynthesis; riboflavin from 2-hydroxy-3-oxobutyl phosphate and 5-amino-6-(D-ribitylamino)uracil: step 1/2. Catalyzes the formation of 6,7-dimethyl-8-ribityllumazine by condensation of 5-amino-6-(D-ribitylamino)uracil with 3,4-dihydroxy-2-butanone 4-phosphate. This is the penultimate step in the biosynthesis of riboflavin. This chain is 6,7-dimethyl-8-ribityllumazine synthase, found in Methylobacterium radiotolerans (strain ATCC 27329 / DSM 1819 / JCM 2831 / NBRC 15690 / NCIMB 10815 / 0-1).